Consider the following 445-residue polypeptide: Dihydroorotate dehydrogenase (quinone), mitochondrial (445 aa).

The N-terminal 16 residues, 1-16 (MNSGFPRILSKKLFTL), are a transit peptide targeting the mitochondrion. The chain crosses the membrane as a helical span at residues 39–56 (LLKYTVGIAIGSFAGFYF). Residues 124–128 (AGLDK) and Ser148 contribute to the FMN site. Lys128 is a binding site for substrate. Residue 173 to 177 (NRYGF) coordinates substrate. 2 residues coordinate FMN: Asn221 and Asn251. Residue 251–256 (NVSSPN) participates in substrate binding. Catalysis depends on Ser254, which acts as the Nucleophile. Residues Lys302 and Ser330 each coordinate FMN. 331–332 (NT) is a substrate binding site. FMN is bound by residues Gly356, Gly386, and 407–408 (YT).

This sequence belongs to the dihydroorotate dehydrogenase family. Type 2 subfamily. It depends on FMN as a cofactor.

It localises to the mitochondrion inner membrane. The enzyme catalyses (S)-dihydroorotate + a quinone = orotate + a quinol. Its pathway is pyrimidine metabolism; UMP biosynthesis via de novo pathway; orotate from (S)-dihydroorotate (quinone route): step 1/1. Its function is as follows. Catalyzes the conversion of dihydroorotate to orotate with quinone as electron acceptor. The protein is Dihydroorotate dehydrogenase (quinone), mitochondrial (URA9) of Kluyveromyces lactis (strain ATCC 8585 / CBS 2359 / DSM 70799 / NBRC 1267 / NRRL Y-1140 / WM37) (Yeast).